The chain runs to 478 residues: Glycogen synthase (478 aa).

Residue lysine 16 participates in ADP-alpha-D-glucose binding.

The protein belongs to the glycosyltransferase 1 family. Bacterial/plant glycogen synthase subfamily.

The enzyme catalyses [(1-&gt;4)-alpha-D-glucosyl](n) + ADP-alpha-D-glucose = [(1-&gt;4)-alpha-D-glucosyl](n+1) + ADP + H(+). The protein operates within glycan biosynthesis; glycogen biosynthesis. In terms of biological role, synthesizes alpha-1,4-glucan chains using ADP-glucose. This chain is Glycogen synthase, found in Lachnoclostridium phytofermentans (strain ATCC 700394 / DSM 18823 / ISDg) (Clostridium phytofermentans).